Here is a 249-residue protein sequence, read N- to C-terminus: MDRRDYLAYAFAGLGAFLVAFIGLPLFMIFIKQAYDLEALQRTLVDPLVIESIRNSLFTATVSTLLGILFGVPLGYVLARKEFKGKNFVQALIDTPIVIPHSVVGIMLLVTFSDAILDNYKGIVAVMLFVSSPFIVNSARDGFLSVDEKLEYVARTLGASGLRTFFSVTLPNAIHSIASGAIMAWARAISEVGAILIVAYYPKTAQVLIMEYFNNYGLRASRPIAVILVTISLAVFIFLRWLVGRGRNA.

The Cytoplasmic portion of the chain corresponds to 1–10 (MDRRDYLAYA). A helical transmembrane segment spans residues 11–31 (FAGLGAFLVAFIGLPLFMIFI). The Extracellular portion of the chain corresponds to 32-56 (KQAYDLEALQRTLVDPLVIESIRNS). The ABC transmembrane type-1 domain maps to 53-239 (IRNSLFTATV…TISLAVFIFL (187 aa)). Residues 57–77 (LFTATVSTLLGILFGVPLGYV) form a helical membrane-spanning segment. Topologically, residues 78-96 (LARKEFKGKNFVQALIDTP) are cytoplasmic. Residues 97-117 (IVIPHSVVGIMLLVTFSDAIL) traverse the membrane as a helical segment. A topological domain (extracellular) is located at residue Asp118. A helical membrane pass occupies residues 119–139 (NYKGIVAVMLFVSSPFIVNSA). At 140 to 179 (RDGFLSVDEKLEYVARTLGASGLRTFFSVTLPNAIHSIAS) the chain is on the cytoplasmic side. Residues 180-200 (GAIMAWARAISEVGAILIVAY) traverse the membrane as a helical segment. The Extracellular segment spans residues 201–223 (YPKTAQVLIMEYFNNYGLRASRP). The helical transmembrane segment at 224-244 (IAVILVTISLAVFIFLRWLVG) threads the bilayer. At 245 to 249 (RGRNA) the chain is on the cytoplasmic side.

It belongs to the binding-protein-dependent transport system permease family. The complex is composed of two ATP-binding proteins (WtpC), two transmembrane proteins (WtpB) and a solute-binding protein (WtpA).

It is found in the cell membrane. Its function is as follows. Part of the ABC transporter complex WtpABC involved in molybdate/tungstate import. Probably responsible for the translocation of the substrate across the membrane. In Pyrococcus furiosus (strain ATCC 43587 / DSM 3638 / JCM 8422 / Vc1), this protein is Molybdate/tungstate transport system permease protein WtpB.